Here is a 331-residue protein sequence, read N- to C-terminus: Cytoskeleton protein RodZ (331 aa).

Over 1–111 (MNTEATQDHQ…LGKRRKKRDG (111 aa)) the chain is Cytoplasmic. The HTH cro/C1-type domain occupies 19 to 71 (LRHAREQLGLSQQAVAERLCLKVSTVRDIEDDKAPADLASTFLRGYIRSYARL). Positions 30-49 (QQAVAERLCLKVSTVRDIED) form a DNA-binding region, H-T-H motif. The chain crosses the membrane as a helical; Signal-anchor for type II membrane protein span at residues 112 to 132 (WLMSFTWLVLFVVIGLSGAWW). The Periplasmic segment spans residues 133–331 (WQDHKAQQEE…TLNAESSPAQ (199 aa)). A compositionally biased stretch (polar residues) spans 146–166 (MADQSSAELNGGDANSQNVPL). A disordered region spans residues 146-238 (MADQSSAELN…ASPLPTDQAN (93 aa)). Composition is skewed to low complexity over residues 167–202 (DTSAPAAPTADSAANSAPTDTASAPTTSAPAQTPAD) and 216–234 (TAGTTPAAPATTPASPLPT).

It belongs to the RodZ family.

The protein localises to the cell inner membrane. Its function is as follows. Cytoskeletal protein that is involved in cell-shape control through regulation of the length of the long axis. This is Cytoskeleton protein RodZ from Klebsiella pneumoniae subsp. pneumoniae (strain ATCC 700721 / MGH 78578).